A 2131-amino-acid polypeptide reads, in one-letter code: Protein Ycf2 (2131 aa).

1466-1473 (GSIGTGRS) contributes to the ATP binding site.

The protein belongs to the Ycf2 family.

The protein resides in the plastid. Its subcellular location is the chloroplast stroma. Functionally, probable ATPase of unknown function. Its presence in a non-photosynthetic plant (Epifagus virginiana) and experiments in tobacco indicate that it has an essential function which is probably not related to photosynthesis. The polypeptide is Protein Ycf2 (Helianthus annuus (Common sunflower)).